The sequence spans 860 residues: Leucine--tRNA ligase (860 aa).

The short motif at 42–52 (PYPSGRLHMGH) is the 'HIGH' region element. Residues 619–623 (KMSKS) carry the 'KMSKS' region motif. K622 contacts ATP.

It belongs to the class-I aminoacyl-tRNA synthetase family.

Its subcellular location is the cytoplasm. The catalysed reaction is tRNA(Leu) + L-leucine + ATP = L-leucyl-tRNA(Leu) + AMP + diphosphate. The sequence is that of Leucine--tRNA ligase from Serratia proteamaculans (strain 568).